The primary structure comprises 94 residues: Co-chaperonin GroES (94 aa).

This sequence belongs to the GroES chaperonin family. Heptamer of 7 subunits arranged in a ring. Interacts with the chaperonin GroEL.

The protein localises to the cytoplasm. In terms of biological role, together with the chaperonin GroEL, plays an essential role in assisting protein folding. The GroEL-GroES system forms a nano-cage that allows encapsulation of the non-native substrate proteins and provides a physical environment optimized to promote and accelerate protein folding. GroES binds to the apical surface of the GroEL ring, thereby capping the opening of the GroEL channel. This Clostridium beijerinckii (strain ATCC 51743 / NCIMB 8052) (Clostridium acetobutylicum) protein is Co-chaperonin GroES.